A 382-amino-acid chain; its full sequence is Galactokinase (382 aa).

34-37 (EHTD) provides a ligand contact to substrate. 124–130 (GAGLSSS) serves as a coordination point for ATP. Residues serine 130 and glutamate 162 each coordinate Mg(2+). Aspartate 174 (proton acceptor) is an active-site residue. Tyrosine 223 serves as a coordination point for substrate.

The protein belongs to the GHMP kinase family. GalK subfamily.

The protein resides in the cytoplasm. It carries out the reaction alpha-D-galactose + ATP = alpha-D-galactose 1-phosphate + ADP + H(+). The protein operates within carbohydrate metabolism; galactose metabolism. In terms of biological role, catalyzes the transfer of the gamma-phosphate of ATP to D-galactose to form alpha-D-galactose-1-phosphate (Gal-1-P). The chain is Galactokinase from Escherichia coli O1:K1 / APEC.